Here is a 239-residue protein sequence, read N- to C-terminus: Zinc finger protein 575 (239 aa).

The segment at 1–62 is disordered; it reads MLGGSVKSEV…PQRPHRCPDC (62 aa). The segment covering 22–31 has biased composition (basic and acidic residues); sequence PETKAPHQDL. Residues 46–57 show a composition bias toward basic residues; the sequence is RPRRRPPPQRPH. C2H2-type zinc fingers lie at residues 57 to 79, 85 to 107, 113 to 135, 141 to 163, 171 to 193, and 207 to 230; these read HRCPDCPKAFSYPSKLATHRLAH, HPCPDCPKAFSYPSKLAAHRLTH, HSCPHCPKAFGHRSKLAAHLWTH, YPCPDCPKSFCYPSKLAAHRHTH, YPCPHCPKAFSFPSKLAAHRLCH, and HRCSSCNQAFGQRRLLLVHQRSHH.

It belongs to the krueppel C2H2-type zinc-finger protein family.

It is found in the nucleus. Its function is as follows. May be involved in transcriptional regulation. The chain is Zinc finger protein 575 (Znf575) from Mus musculus (Mouse).